The sequence spans 202 residues: uncharacterized protein (202 aa).

This is an uncharacterized protein from Archaeoglobus fulgidus (strain ATCC 49558 / DSM 4304 / JCM 9628 / NBRC 100126 / VC-16).